Reading from the N-terminus, the 275-residue chain is Mitochondrial fission factor homolog A (275 aa).

Residues Met1–Met255 are Cytoplasmic-facing. Positions Asp100–Asn171 are disordered. The segment covering Pro114–Arg130 has biased composition (basic and acidic residues). Positions Ser131–Ile142 are enriched in polar residues. The stretch at Leu223–Arg253 forms a coiled coil. A helical; Anchor for type IV membrane protein transmembrane segment spans residues Val256 to Leu273. Topologically, residues Arg274–Arg275 are extracellular.

Belongs to the Tango11 family.

It is found in the mitochondrion outer membrane. Its subcellular location is the peroxisome. Its function is as follows. Plays a role in mitochondrial and peroxisomal fission. Promotes the recruitment and association of the fission mediator dynamin-related protein 1 (DNM1L) to the mitochondrial surface. The sequence is that of Mitochondrial fission factor homolog A from Danio rerio (Zebrafish).